Here is a 299-residue protein sequence, read N- to C-terminus: ATP phosphoribosyltransferase (299 aa).

This sequence belongs to the ATP phosphoribosyltransferase family. Long subfamily. In terms of assembly, equilibrium between an active dimeric form, an inactive hexameric form and higher aggregates. Interconversion between the various forms is largely reversible and is influenced by the natural substrates and inhibitors of the enzyme. It depends on Mg(2+) as a cofactor.

It localises to the cytoplasm. It catalyses the reaction 1-(5-phospho-beta-D-ribosyl)-ATP + diphosphate = 5-phospho-alpha-D-ribose 1-diphosphate + ATP. Its pathway is amino-acid biosynthesis; L-histidine biosynthesis; L-histidine from 5-phospho-alpha-D-ribose 1-diphosphate: step 1/9. Its activity is regulated as follows. Feedback inhibited by histidine. Its function is as follows. Catalyzes the condensation of ATP and 5-phosphoribose 1-diphosphate to form N'-(5'-phosphoribosyl)-ATP (PR-ATP). Has a crucial role in the pathway because the rate of histidine biosynthesis seems to be controlled primarily by regulation of HisG enzymatic activity. The polypeptide is ATP phosphoribosyltransferase (Sodalis glossinidius (strain morsitans)).